A 116-amino-acid polypeptide reads, in one-letter code: uncharacterized protein (116 aa).

Belongs to the BolA/IbaG family.

Its subcellular location is the mitochondrion. This is an uncharacterized protein from Schizosaccharomyces pombe (strain 972 / ATCC 24843) (Fission yeast).